Here is a 212-residue protein sequence, read N- to C-terminus: Uracil phosphoribosyltransferase (212 aa).

Residues arginine 78, arginine 103, and 130-138 (DPMLATGGS) each bind 5-phospho-alpha-D-ribose 1-diphosphate. Uracil is bound by residues isoleucine 193 and 198 to 200 (GDA). Position 199 (aspartate 199) interacts with 5-phospho-alpha-D-ribose 1-diphosphate.

This sequence belongs to the UPRTase family. The cofactor is Mg(2+).

The enzyme catalyses UMP + diphosphate = 5-phospho-alpha-D-ribose 1-diphosphate + uracil. It functions in the pathway pyrimidine metabolism; UMP biosynthesis via salvage pathway; UMP from uracil: step 1/1. Allosterically activated by GTP. Functionally, catalyzes the conversion of uracil and 5-phospho-alpha-D-ribose 1-diphosphate (PRPP) to UMP and diphosphate. The protein is Uracil phosphoribosyltransferase of Pseudomonas aeruginosa (strain LESB58).